We begin with the raw amino-acid sequence, 523 residues long: Glycine betaine transporter 1 (523 aa).

Transmembrane regions (helical) follow at residues 33–53 (VFGISAGFIALFLVAALVLDA), 71–91 (FDWLFIIAGNIFVIFCLALIV), 109–129 (SFMSWLAMLFAAGMGIGLMFW), 165–185 (FHWGLHPWAIYGVVALSLAFF), 214–234 (IVDILAVLATLFGLATSLGLG), 251–271 (GLGLQIVVITVVTLLAVVSVV), 286–306 (MVVAFLLLILVGLIGWAASLG), 337–357 (WTVFYWAWWISWSPFVGMFIA), 372–392 (VLIVPTVVTVVWMSVFGGLAI), 420–440 (VLPFGNILSIIAVVLVLVFFI), 467–487 (VFWAFMEGAIAVALLWIGGSE), and 496–516 (AISTALPFTFILLAMCVSLLM).

This sequence belongs to the BCCT transporter (TC 2.A.15) family.

It is found in the cell inner membrane. In terms of biological role, involved in the uptake of the osmoprotectant glycine betaine. This Vibrio parahaemolyticus serotype O3:K6 (strain RIMD 2210633) protein is Glycine betaine transporter 1.